The following is a 134-amino-acid chain: Large ribosomal subunit protein bL20 (134 aa).

Belongs to the bacterial ribosomal protein bL20 family.

Functionally, binds directly to 23S ribosomal RNA and is necessary for the in vitro assembly process of the 50S ribosomal subunit. It is not involved in the protein synthesizing functions of that subunit. The sequence is that of Large ribosomal subunit protein bL20 from Brucella abortus (strain S19).